The chain runs to 544 residues: Chaperonin GroEL 2 (544 aa).

ATP is bound by residues 29 to 32 (TLGP), 86 to 90 (DGTTT), Gly-413, 479 to 481 (NAA), and Asp-495.

It belongs to the chaperonin (HSP60) family. In terms of assembly, forms a cylinder of 14 subunits composed of two heptameric rings stacked back-to-back. Interacts with the co-chaperonin GroES.

It localises to the cytoplasm. It catalyses the reaction ATP + H2O + a folded polypeptide = ADP + phosphate + an unfolded polypeptide.. Its function is as follows. Together with its co-chaperonin GroES, plays an essential role in assisting protein folding. The GroEL-GroES system forms a nano-cage that allows encapsulation of the non-native substrate proteins and provides a physical environment optimized to promote and accelerate protein folding. This chain is Chaperonin GroEL 2, found in Prochlorococcus marinus (strain MIT 9313).